The following is a 78-amino-acid chain: Small ribosomal subunit protein bS16c (78 aa).

Belongs to the bacterial ribosomal protein bS16 family.

It localises to the plastid. It is found in the chloroplast. This Gracilaria tenuistipitata var. liui (Red alga) protein is Small ribosomal subunit protein bS16c.